Consider the following 117-residue polypeptide: Calcitonin receptor-stimulating peptide 2 (117 aa).

A signal peptide spans 1 to 25 (MGFWKFPPFLVLSILVLYQAGMFHT). Positions 26 to 79 (APVRLPLESSFDSATLTEEEVSLLLVAMVKDYVQMKATVLEQESEDFSITAQEK) are excised as a propeptide. C81 and C86 are oxidised to a cystine.

This sequence belongs to the calcitonin family. As to expression, mainly expressed in the thyroid gland and CNS. Found in the nerve cells of the cerebrum, hippocampus, hypothalamus, pons/midbrain and thalamus. Also detected in the glia-like cells of pons/midbrain and in meninx of tactus opticus.

The protein resides in the secreted. The chain is Calcitonin receptor-stimulating peptide 2 (CRSP2) from Sus scrofa (Pig).